A 492-amino-acid polypeptide reads, in one-letter code: Catalase (492 aa).

Catalysis depends on residues H65 and N138. Y348 lines the heme pocket.

Belongs to the catalase family. In terms of assembly, homotetramer. It depends on heme as a cofactor. In terms of tissue distribution, in stems, leaves, roots and developing fruits.

Its subcellular location is the cytoplasm. The protein resides in the cytosol. It is found in the peroxisome matrix. The catalysed reaction is 2 H2O2 = O2 + 2 H2O. In terms of biological role, catalyzes the degradation of hydrogen peroxide (H(2)O(2)) generated by peroxisomal oxidases to water and oxygen, thereby protecting cells from the toxic effects of hydrogen peroxide. The sequence is that of Catalase (CAT) from Capsicum annuum (Capsicum pepper).